The following is a 369-amino-acid chain: Phosphoribosyl pyrophosphate synthase-associated protein 2 (369 aa).

M1 carries the post-translational modification N-acetylmethionine. T5 is modified (phosphothreonine). S219, S227, and S233 each carry phosphoserine.

It belongs to the ribose-phosphate pyrophosphokinase family. As to quaternary structure, binds to PRPS1 and PRPS2. In terms of tissue distribution, ubiquitous.

Functionally, seems to play a negative regulatory role in 5-phosphoribose 1-diphosphate synthesis. The chain is Phosphoribosyl pyrophosphate synthase-associated protein 2 (PRPSAP2) from Homo sapiens (Human).